We begin with the raw amino-acid sequence, 144 residues long: Glutaredoxin-C6 (144 aa).

In terms of domain architecture, Glutaredoxin spans 39 to 143; sequence EAKIRRLISE…PKLVQVGALW (105 aa). The cysteines at positions 59 and 62 are disulfide-linked.

The protein belongs to the glutaredoxin family. CC-type subfamily.

The protein resides in the cytoplasm. Has a glutathione-disulfide oxidoreductase activity in the presence of NADPH and glutathione reductase. Reduces low molecular weight disulfides and proteins. The polypeptide is Glutaredoxin-C6 (GRXC6) (Arabidopsis thaliana (Mouse-ear cress)).